The sequence spans 57 residues: UPF0337 protein SAV_1088 (57 aa).

Basic and acidic residues-rich tracts occupy residues 1 to 15 (MAGD…EQAK) and 36 to 57 (QAEK…VFKH). The segment at 1–57 (MAGDQKAKAKMEQAKGKAKAAAGRAVGNERMAAEGQAEKSKGDARQAKEKTKDVFKH) is disordered.

The protein belongs to the UPF0337 (CsbD) family.

The chain is UPF0337 protein SAV_1088 from Streptomyces avermitilis (strain ATCC 31267 / DSM 46492 / JCM 5070 / NBRC 14893 / NCIMB 12804 / NRRL 8165 / MA-4680).